A 281-amino-acid polypeptide reads, in one-letter code: Protease HtpX homolog (281 aa).

2 consecutive transmembrane segments (helical) span residues 6–26 and 28–48; these read VWLL…AIGG and SGAL…YYYS. Histidine 130 is a binding site for Zn(2+). The active site involves glutamate 131. Residue histidine 134 coordinates Zn(2+). 2 consecutive transmembrane segments (helical) span residues 140–160 and 181–201; these read VLIG…SNIV and IASL…QLAI. A Zn(2+)-binding site is contributed by glutamate 206.

This sequence belongs to the peptidase M48B family. Zn(2+) is required as a cofactor.

It is found in the cell membrane. The sequence is that of Protease HtpX homolog from Pelotomaculum thermopropionicum (strain DSM 13744 / JCM 10971 / SI).